The chain runs to 213 residues: Putative 3-methyladenine DNA glycosylase (213 aa).

This sequence belongs to the DNA glycosylase MPG family.

The sequence is that of Putative 3-methyladenine DNA glycosylase from Corynebacterium jeikeium (strain K411).